We begin with the raw amino-acid sequence, 179 residues long: Large ribosomal subunit protein uL5 (179 aa).

It belongs to the universal ribosomal protein uL5 family. In terms of assembly, part of the 50S ribosomal subunit; part of the 5S rRNA/L5/L18/L25 subcomplex. Contacts the 5S rRNA and the P site tRNA. Forms a bridge to the 30S subunit in the 70S ribosome.

In terms of biological role, this is one of the proteins that bind and probably mediate the attachment of the 5S RNA into the large ribosomal subunit, where it forms part of the central protuberance. In the 70S ribosome it contacts protein S13 of the 30S subunit (bridge B1b), connecting the 2 subunits; this bridge is implicated in subunit movement. Contacts the P site tRNA; the 5S rRNA and some of its associated proteins might help stabilize positioning of ribosome-bound tRNAs. This is Large ribosomal subunit protein uL5 from Thermoanaerobacter sp. (strain X514).